Consider the following 332-residue polypeptide: Biotin synthase (332 aa).

The Radical SAM core domain occupies 53–283; it reads WGKGGIHACS…VHPHSIIKFA (231 aa). [4Fe-4S] cluster is bound by residues cysteine 71, cysteine 75, and cysteine 78. Residues cysteine 150, cysteine 211, and lysine 281 each coordinate [2Fe-2S] cluster.

It belongs to the radical SAM superfamily. Biotin synthase family. As to quaternary structure, homodimer. It depends on [4Fe-4S] cluster as a cofactor. The cofactor is [2Fe-2S] cluster.

It catalyses the reaction (4R,5S)-dethiobiotin + (sulfur carrier)-SH + 2 reduced [2Fe-2S]-[ferredoxin] + 2 S-adenosyl-L-methionine = (sulfur carrier)-H + biotin + 2 5'-deoxyadenosine + 2 L-methionine + 2 oxidized [2Fe-2S]-[ferredoxin]. It functions in the pathway cofactor biosynthesis; biotin biosynthesis; biotin from 7,8-diaminononanoate: step 2/2. Its function is as follows. Catalyzes the conversion of dethiobiotin (DTB) to biotin by the insertion of a sulfur atom into dethiobiotin via a radical-based mechanism. The chain is Biotin synthase from Chlorobium phaeovibrioides (strain DSM 265 / 1930) (Prosthecochloris vibrioformis (strain DSM 265)).